A 259-amino-acid polypeptide reads, in one-letter code: Leucine-rich repeat-containing protein 61 (259 aa).

LRR repeat units follow at residues 54–75 (NLEW…ASLR), 76–97 (QLAV…AACE), and 98–119 (NLQS…QCLA). Residues 138–178 (NPLCANASYWAVVRELLPGLKVIDGERVSGRGSELYQLCRD) form the LRRCT domain.

The protein is Leucine-rich repeat-containing protein 61 (Lrrc61) of Mus musculus (Mouse).